Consider the following 380-residue polypeptide: Actin-like protein (380 aa).

This sequence belongs to the actin family. ARP1 subfamily.

Its subcellular location is the cytoplasm. It is found in the cytoskeleton. Its function is as follows. Involved in nuclear migration. May function as a component of the dynactin complex which activates force generation by cytoplasmic dynein. This Neurospora crassa (strain ATCC 24698 / 74-OR23-1A / CBS 708.71 / DSM 1257 / FGSC 987) protein is Actin-like protein (ro-4).